The primary structure comprises 520 residues: NADH-quinone oxidoreductase subunit N (520 aa).

14 helical membrane passes run 13–33, 55–75, 87–107, 115–135, 141–161, 176–196, 219–239, 250–270, 285–305, 313–333, 339–359, 383–403, 425–445, and 468–488; these read ALLP…ASVW, FGVI…GDGA, GFRW…LMLL, AAFG…MMVL, LMFV…LAGV, FLLG…LFGA, FMSG…AAPF, APLP…FAVF, WHMG…VFAL, MLAY…IVGD, ALIF…GVLI, WLAI…VLGG, ILAV…LAVV, and SLIA…TPIM. Residues 494 to 508 are compositionally biased toward low complexity; it reads ATTTTSPTSNPAAPR. A disordered region spans residues 494 to 520; sequence ATTTTSPTSNPAAPRGEVRLQTASVPR.

This sequence belongs to the complex I subunit 2 family. As to quaternary structure, NDH-1 is composed of 14 different subunits. Subunits NuoA, H, J, K, L, M, N constitute the membrane sector of the complex.

Its subcellular location is the cell inner membrane. It carries out the reaction a quinone + NADH + 5 H(+)(in) = a quinol + NAD(+) + 4 H(+)(out). Its function is as follows. NDH-1 shuttles electrons from NADH, via FMN and iron-sulfur (Fe-S) centers, to quinones in the respiratory chain. The immediate electron acceptor for the enzyme in this species is believed to be ubiquinone. Couples the redox reaction to proton translocation (for every two electrons transferred, four hydrogen ions are translocated across the cytoplasmic membrane), and thus conserves the redox energy in a proton gradient. This is NADH-quinone oxidoreductase subunit N from Gemmatimonas aurantiaca (strain DSM 14586 / JCM 11422 / NBRC 100505 / T-27).